Here is a 267-residue protein sequence, read N- to C-terminus: Matrilysin (267 aa).

An N-terminal signal peptide occupies residues 1-17 (MRLTVLCAVCLLPGSLA). The propeptide at 18–94 (LPLPQEAGGM…PRCGVPDVAE (77 aa)) is activation peptide. Residues 85 to 92 (PRCGVPDV) carry the Cysteine switch motif. Cys-87 is a Zn(2+) binding site. Asp-153 contacts Ca(2+). His-163 and Asp-165 together coordinate Zn(2+). Ca(2+) contacts are provided by Asp-170, Gly-171, Gly-173, and Thr-175. His-178 serves as a coordination point for Zn(2+). Ca(2+)-binding residues include Gly-185, Gly-187, and Asp-189. His-191 provides a ligand contact to Zn(2+). The Ca(2+) site is built by Asp-193 and Glu-196. Residue His-214 participates in Zn(2+) binding. The active site involves Glu-215. The Zn(2+) site is built by His-218 and His-224.

This sequence belongs to the peptidase M10A family. It depends on Ca(2+) as a cofactor. The cofactor is Zn(2+).

It localises to the secreted. Its subcellular location is the extracellular space. The protein resides in the extracellular matrix. It carries out the reaction Cleavage of 14-Ala-|-Leu-15 and 16-Tyr-|-Leu-17 in B chain of insulin. No action on collagen types I, II, IV, V. Cleaves gelatin chain alpha2(I) &gt; alpha1(I).. Functionally, degrades casein, gelatins of types I, III, IV, and V, and fibronectin. Activates procollagenase. The protein is Matrilysin (MMP7) of Homo sapiens (Human).